The primary structure comprises 74 residues: RNA-binding protein Hfq (74 aa).

Residues 9–69 (DQFLNQLRKE…ISTFAPQKNV (61 aa)) enclose the Sm domain.

Belongs to the Hfq family. In terms of assembly, homohexamer.

Its function is as follows. RNA chaperone that binds small regulatory RNA (sRNAs) and mRNAs to facilitate mRNA translational regulation in response to envelope stress, environmental stress and changes in metabolite concentrations. Also binds with high specificity to tRNAs. This chain is RNA-binding protein Hfq, found in Anoxybacillus flavithermus (strain DSM 21510 / WK1).